The primary structure comprises 258 residues: Trans-aconitate 2-methyltransferase (258 aa).

The protein belongs to the methyltransferase superfamily. Tam family.

The protein resides in the cytoplasm. It carries out the reaction trans-aconitate + S-adenosyl-L-methionine = (E)-3-(methoxycarbonyl)pent-2-enedioate + S-adenosyl-L-homocysteine. Its function is as follows. Catalyzes the S-adenosylmethionine monomethyl esterification of trans-aconitate. This Acidovorax sp. (strain JS42) protein is Trans-aconitate 2-methyltransferase.